The primary structure comprises 467 residues: 3-isopropylmalate dehydratase large subunit (467 aa).

Residues Cys347, Cys408, and Cys411 each coordinate [4Fe-4S] cluster.

This sequence belongs to the aconitase/IPM isomerase family. LeuC type 1 subfamily. In terms of assembly, heterodimer of LeuC and LeuD. It depends on [4Fe-4S] cluster as a cofactor.

The enzyme catalyses (2R,3S)-3-isopropylmalate = (2S)-2-isopropylmalate. It functions in the pathway amino-acid biosynthesis; L-leucine biosynthesis; L-leucine from 3-methyl-2-oxobutanoate: step 2/4. Its function is as follows. Catalyzes the isomerization between 2-isopropylmalate and 3-isopropylmalate, via the formation of 2-isopropylmaleate. This Bordetella pertussis (strain Tohama I / ATCC BAA-589 / NCTC 13251) protein is 3-isopropylmalate dehydratase large subunit.